The following is a 537-amino-acid chain: CTP synthase (537 aa).

An amidoligase domain region spans residues 1 to 267; sequence MTKYIFVTGG…DQIVCDHLKL (267 aa). Ser-13 is a binding site for CTP. Ser-13 serves as a coordination point for UTP. ATP is bound at residue 14–19; the sequence is SIGKGI. Tyr-54 contacts L-glutamine. Asp-71 serves as a coordination point for ATP. The Mg(2+) site is built by Asp-71 and Glu-141. Residues 148 to 150, 188 to 193, and Lys-224 contribute to the CTP site; these read DIE and KTKPTQ. UTP contacts are provided by residues 188-193 and Lys-224; that span reads KTKPTQ. ATP is bound at residue 240–242; the sequence is RDV. In terms of domain architecture, Glutamine amidotransferase type-1 spans 292 to 535; it reads RIALVGKYVE…VTAAVKNKNQ (244 aa). Position 354 (Gly-354) interacts with L-glutamine. Cys-381 serves as the catalytic Nucleophile; for glutamine hydrolysis. L-glutamine-binding positions include 382 to 385, Glu-405, and Arg-463; that span reads LGMQ. Active-site residues include His-508 and Glu-510.

It belongs to the CTP synthase family. As to quaternary structure, homotetramer.

It catalyses the reaction UTP + L-glutamine + ATP + H2O = CTP + L-glutamate + ADP + phosphate + 2 H(+). The catalysed reaction is L-glutamine + H2O = L-glutamate + NH4(+). The enzyme catalyses UTP + NH4(+) + ATP = CTP + ADP + phosphate + 2 H(+). The protein operates within pyrimidine metabolism; CTP biosynthesis via de novo pathway; CTP from UDP: step 2/2. Allosterically activated by GTP, when glutamine is the substrate; GTP has no effect on the reaction when ammonia is the substrate. The allosteric effector GTP functions by stabilizing the protein conformation that binds the tetrahedral intermediate(s) formed during glutamine hydrolysis. Inhibited by the product CTP, via allosteric rather than competitive inhibition. In terms of biological role, catalyzes the ATP-dependent amination of UTP to CTP with either L-glutamine or ammonia as the source of nitrogen. Regulates intracellular CTP levels through interactions with the four ribonucleotide triphosphates. This Streptococcus equi subsp. zooepidemicus (strain H70) protein is CTP synthase.